Consider the following 485-residue polypeptide: Glutamyl-tRNA(Gln) amidotransferase subunit A (485 aa).

Residues Lys79 and Ser154 each act as charge relay system in the active site. Ser178 functions as the Acyl-ester intermediate in the catalytic mechanism.

This sequence belongs to the amidase family. GatA subfamily. As to quaternary structure, heterotrimer of A, B and C subunits.

The catalysed reaction is L-glutamyl-tRNA(Gln) + L-glutamine + ATP + H2O = L-glutaminyl-tRNA(Gln) + L-glutamate + ADP + phosphate + H(+). Allows the formation of correctly charged Gln-tRNA(Gln) through the transamidation of misacylated Glu-tRNA(Gln) in organisms which lack glutaminyl-tRNA synthetase. The reaction takes place in the presence of glutamine and ATP through an activated gamma-phospho-Glu-tRNA(Gln). This Staphylococcus haemolyticus (strain JCSC1435) protein is Glutamyl-tRNA(Gln) amidotransferase subunit A.